Here is a 164-residue protein sequence, read N- to C-terminus: MAQRDKKDQEPTELRAPEITLCANSCGFPGNPATQNLCQNCFLAATASTSSPSSLSSPVLDKQPPRPAAPLVEPQAPLPPPVEEMASALATAPAPVAKTSAVNRCSRCRKRVGLTGFRCRCGHLFCGEHRYSDRHGCSYDYKSAARDAIARDNPVVRAAKIVRF.

The A20-type zinc finger occupies 16 to 50 (APEITLCANSCGFPGNPATQNLCQNCFLAATASTS). Zn(2+) is bound by residues Cys-22, Cys-26, Cys-38, and Cys-41. The segment covering 48–58 (STSSPSSLSSP) has biased composition (low complexity). Positions 48–81 (STSSPSSLSSPVLDKQPPRPAAPLVEPQAPLPPP) are disordered. The AN1-type zinc-finger motif lies at 99-145 (TSAVNRCSRCRKRVGLTGFRCRCGHLFCGEHRYSDRHGCSYDYKSAA). The Zn(2+) site is built by Cys-105, Cys-108, Cys-119, Cys-121, Cys-126, His-129, His-135, and Cys-137.

May be involved in environmental stress response. This chain is Zinc finger A20 and AN1 domain-containing stress-associated protein 1 (SAP1), found in Oryza sativa subsp. indica (Rice).